A 401-amino-acid polypeptide reads, in one-letter code: Serine/threonine transporter SstT (401 aa).

A run of 8 helical transmembrane segments spans residues 17–37, 40–60, 78–98, 138–158, 179–199, 212–232, 295–315, and 336–356; these read IGIG…ITVI, FGSL…LTLV, VICL…GASY, ALAT…GLAF, VVGW…FDTI, LLLL…NPLI, MAGA…TLGI, and ASGV…LFGI.

Belongs to the dicarboxylate/amino acid:cation symporter (DAACS) (TC 2.A.23) family.

The protein resides in the cell membrane. The enzyme catalyses L-serine(in) + Na(+)(in) = L-serine(out) + Na(+)(out). The catalysed reaction is L-threonine(in) + Na(+)(in) = L-threonine(out) + Na(+)(out). Its function is as follows. Involved in the import of serine and threonine into the cell, with the concomitant import of sodium (symport system). In Streptococcus suis (strain 98HAH33), this protein is Serine/threonine transporter SstT.